A 752-amino-acid chain; its full sequence is Complement C2 (752 aa).

A signal peptide spans 1-20 (MGPLMVLFCLLFLYPGLADS). Sushi domains are found at residues 22-86 (PSCP…VCKP), 87-146 (VRCP…VCDN), and 149-206 (GHCP…ICRQ). Intrachain disulfides connect cysteine 24–cysteine 64, cysteine 51–cysteine 84, cysteine 89–cysteine 131, cysteine 117–cysteine 144, cysteine 151–cysteine 191, and cysteine 177–cysteine 204. The N-linked (GlcNAc...) asparagine glycan is linked to asparagine 29. N-linked (GlcNAc...) asparagine glycosylation is present at asparagine 112. Residues 254-452 (NLYLLLDCSQ…KALHQVFEHM (199 aa)) enclose the VWFA domain. Residues 260–264 (DCSQS) carry the MIDAS-like motif motif. The Mg(2+) site is built by serine 262 and serine 264. Residues serine 262 and serine 264 each coordinate Mn(2+). Residues asparagine 290 and asparagine 333 are each glycosylated (N-linked (GlcNAc...) asparagine). Position 337 (threonine 337) interacts with Mg(2+). A Mn(2+)-binding site is contributed by threonine 337. Cystine bridges form between cysteine 463/cysteine 581, cysteine 492/cysteine 508, and cysteine 584/cysteine 600. Residues 464-744 (GVGNMSANAS…MQPWLRQHLG (281 aa)) enclose the Peptidase S1 domain. N-linked (GlcNAc...) asparagine glycans are attached at residues asparagine 467 and asparagine 471. Catalysis depends on charge relay system residues histidine 507 and aspartate 561. Asparagine 621 carries N-linked (GlcNAc...) asparagine glycosylation. Intrachain disulfides connect cysteine 638–cysteine 665 and cysteine 675–cysteine 705. Asparagine 651 is a glycosylation site (N-linked (GlcNAc...) (complex) asparagine). Serine 679 functions as the Charge relay system in the catalytic mechanism.

This sequence belongs to the peptidase S1 family. In terms of assembly, serine protease component of the C3 convertase, also named C4bC2b, composed of the serine protease complement C2b and complement C4b. Serine protease component of the C5 convertase, also named C4bC2bC3b, composed of the serine protease complement C2b, complement C3b, as well as complement C4b. (Microbial infection) Interacts with Schistosoma haematobium TOR (via N-terminal extracellular domain). This results in inhibition of the classical and lectin pathway of complement activation, probably due to interference with binding of C2a to C4b such that C3 convertase cannot be formed. This infers resistance to complement-mediated cell lysis, allowing parasite survival and infection. Mg(2+) is required as a cofactor. Mn(2+) serves as cofactor. Post-translationally, cleaved and activated by different proteases depending on the complement pathway to generate complement C2a and serine protease complement C2b chains. Cleaved and activated by C1S following activation by the classical complement system. Cleaved and activated by MASP2 following activation by the lectin complement system. Cleaved and activated by GZMK following activation by the GZMK complement system.

Its subcellular location is the secreted. It is found in the cell surface. It catalyses the reaction Selective cleavage of Arg-|-Ser bond in complement component C3 alpha-chain to form C3a and C3b, and Arg-|-Xaa bond in complement component C5 alpha-chain to form C5a and C5b.. Its function is as follows. Precursor of the catalytic component of the C3 and C5 convertase complexes, which are part of the complement pathway, a cascade of proteins that leads to phagocytosis and breakdown of pathogens and signaling that strengthens the adaptive immune system. Component C2 is part of the classical, lectin and GZMK complement systems. Functionally, catalytic component of the complement C3 and C5 convertase complexes. Following complement activation, recruited to the surface of pathogens by complement C4b opsonin to form the C3 convertase, or C3b and C4b opsonins to form the C5 convertase. As part of the C3 convertase, cleaves and activate C3 into C3a anaphylatoxin and C3b opsonin, the next components of the complement pathways. As part of the C5 convertase, cleaves and activate C5 into C5a anaphylatoxin and C5b component of the membrane attack complex. The sequence is that of Complement C2 from Homo sapiens (Human).